The sequence spans 200 residues: Polyadenylate-binding protein 1-like 2 (200 aa).

RRM domains are found at residues 2–80 and 90–166; these read ASLY…WSQR and GNVF…RFKS. A disordered region spans residues 170 to 200; that stretch reads REAERGAWARQSTSADVKDFEEDTDEEATLR. The segment covering 188–200 has biased composition (acidic residues); the sequence is DFEEDTDEEATLR.

The sequence is that of Polyadenylate-binding protein 1-like 2 (PABPC1L2A) from Homo sapiens (Human).